A 245-amino-acid chain; its full sequence is 8-amino-3,8-dideoxy-manno-octulosonate cytidylyltransferase (245 aa).

Belongs to the KdsB family.

It localises to the cytoplasm. The enzyme catalyses 8-amino-3,8-dideoxy-alpha-D-manno-octulosonate + CTP = CMP-8-amino-3,8-dideoxy-alpha-D-manno-oct-2-ulosonate + diphosphate. Its pathway is bacterial outer membrane biogenesis; lipopolysaccharide biosynthesis. Its function is as follows. Activates KDO8N (a required 8-carbon sugar) for incorporation into bacterial lipopolysaccharide in the Shewanella genus. This chain is 8-amino-3,8-dideoxy-manno-octulosonate cytidylyltransferase, found in Shewanella sp. (strain MR-7).